A 445-amino-acid chain; its full sequence is RNA pseudouridine synthase 2, chloroplastic (445 aa).

A chloroplast-targeting transit peptide spans 1 to 44; that stretch reads MATTAAASPPAIATALSALLRRQRRRSSRCVGASHARCLAADAN. Positions 47-66 are disordered; sequence AVAPSRRGGHGGTRLEEAVP. In terms of domain architecture, S4 RNA-binding spans 72 to 147; that stretch reads SRIDAWISAR…IPLDIVYEDD (76 aa). Residue D235 is part of the active site.

The protein belongs to the pseudouridine synthase RluA family.

It localises to the plastid. It is found in the chloroplast. The catalysed reaction is a uridine in RNA = a pseudouridine in RNA. This is RNA pseudouridine synthase 2, chloroplastic from Oryza sativa subsp. japonica (Rice).